Reading from the N-terminus, the 281-residue chain is Pantothenate synthetase (281 aa).

30–37 (MGYLHEGH) is a binding site for ATP. The active-site Proton donor is H37. Q61 contributes to the (R)-pantoate binding site. Q61 contributes to the beta-alanine binding site. 147 to 150 (GEKD) is an ATP binding site. Q153 contacts (R)-pantoate. ATP contacts are provided by residues I176 and 184–187 (KSSR).

This sequence belongs to the pantothenate synthetase family. As to quaternary structure, homodimer.

The protein resides in the cytoplasm. It carries out the reaction (R)-pantoate + beta-alanine + ATP = (R)-pantothenate + AMP + diphosphate + H(+). It participates in cofactor biosynthesis; (R)-pantothenate biosynthesis; (R)-pantothenate from (R)-pantoate and beta-alanine: step 1/1. Catalyzes the condensation of pantoate with beta-alanine in an ATP-dependent reaction via a pantoyl-adenylate intermediate. This Clostridium botulinum (strain ATCC 19397 / Type A) protein is Pantothenate synthetase.